Here is a 126-residue protein sequence, read N- to C-terminus: Aspartate 1-decarboxylase 2 (126 aa).

The Schiff-base intermediate with substrate; via pyruvic acid role is filled by Ser-25. A Pyruvic acid (Ser) modification is found at Ser-25. Thr-57 is a binding site for substrate. Tyr-58 (proton donor) is an active-site residue. Substrate is bound at residue 73-75 (GSA).

Belongs to the PanD family. As to quaternary structure, heterooctamer of four alpha and four beta subunits. Pyruvate is required as a cofactor. Post-translationally, is synthesized initially as an inactive proenzyme, which is activated by self-cleavage at a specific serine bond to produce a beta-subunit with a hydroxyl group at its C-terminus and an alpha-subunit with a pyruvoyl group at its N-terminus.

Its subcellular location is the cytoplasm. The enzyme catalyses L-aspartate + H(+) = beta-alanine + CO2. Its pathway is cofactor biosynthesis; (R)-pantothenate biosynthesis; beta-alanine from L-aspartate: step 1/1. Functionally, catalyzes the pyruvoyl-dependent decarboxylation of aspartate to produce beta-alanine. The polypeptide is Aspartate 1-decarboxylase 2 (Polaromonas sp. (strain JS666 / ATCC BAA-500)).